Reading from the N-terminus, the 269-residue chain is MLVVEGLTCRFGAKAAVDDASFQISPGGFVGVIGRSGAGKSTLLRTINRLVTPTQGRILFDGTDVTALRGKELRQWRARSAMIFQQFNLVGRLDVLTNVLMGRLATMPAWRSLSQTWPEHDKALAMSALEQFDIAALAAQRADQLSGGQQQRVAIARALVQQPDIILADEPIASLDPRNTKIVMDALLRINKHFGITVLCNLHSLDLARSYCDRLIGMAQGRVVFDGAPSALTDHVARELYDLEATDVMGGSPVPAPEGIPALGTAAAA.

The ABC transporter domain maps to 2-245; sequence LVVEGLTCRF…VARELYDLEA (244 aa). 34–41 serves as a coordination point for ATP; it reads GRSGAGKS.

It belongs to the ABC transporter superfamily. Phosphonates importer (TC 3.A.1.9.1) family. The complex is composed of two ATP-binding proteins (PhnC), two transmembrane proteins (PhnE) and a solute-binding protein (PhnD).

It is found in the cell inner membrane. It carries out the reaction phosphonate(out) + ATP + H2O = phosphonate(in) + ADP + phosphate + H(+). In terms of biological role, part of the ABC transporter complex PhnCDE involved in phosphonates import. Responsible for energy coupling to the transport system. This Bradyrhizobium diazoefficiens (strain JCM 10833 / BCRC 13528 / IAM 13628 / NBRC 14792 / USDA 110) protein is Phosphonates import ATP-binding protein PhnC.